A 479-amino-acid chain; its full sequence is Aspartyl/glutamyl-tRNA(Asn/Gln) amidotransferase subunit B (479 aa).

It belongs to the GatB/GatE family. GatB subfamily. Heterotrimer of A, B and C subunits.

The catalysed reaction is L-glutamyl-tRNA(Gln) + L-glutamine + ATP + H2O = L-glutaminyl-tRNA(Gln) + L-glutamate + ADP + phosphate + H(+). The enzyme catalyses L-aspartyl-tRNA(Asn) + L-glutamine + ATP + H2O = L-asparaginyl-tRNA(Asn) + L-glutamate + ADP + phosphate + 2 H(+). Functionally, allows the formation of correctly charged Asn-tRNA(Asn) or Gln-tRNA(Gln) through the transamidation of misacylated Asp-tRNA(Asn) or Glu-tRNA(Gln) in organisms which lack either or both of asparaginyl-tRNA or glutaminyl-tRNA synthetases. The reaction takes place in the presence of glutamine and ATP through an activated phospho-Asp-tRNA(Asn) or phospho-Glu-tRNA(Gln). This is Aspartyl/glutamyl-tRNA(Asn/Gln) amidotransferase subunit B from Streptococcus pyogenes serotype M6 (strain ATCC BAA-946 / MGAS10394).